The chain runs to 790 residues: Sodium- and chloride-dependent glycine transporter 2 (790 aa).

Positions 1–39 (MDYVNVVDGSKKTMNSPEGAAPGLIGATGITNPTPDNDL) are disordered. At 1–192 (MDYVNVVDGS…ARGNWSNKLD (192 aa)) the chain is on the cytoplasmic side. The next 3 helical transmembrane spans lie at 193–213 (FILS…FPYL), 220–240 (GAFL…IFYL), and 264–284 (GCGI…NIIM). Na(+) contacts are provided by Gly199, Ala201, Val202, and Asn206. At 285-387 (CYTIFYLFAS…GIEYPGEIRW (103 aa)) the chain is on the extracellular side. The cysteines at positions 304 and 313 are disulfide-linked. 4 N-linked (GlcNAc...) asparagine glycosylation sites follow: Asn336, Asn346, Asn351, and Asn357. 3 consecutive transmembrane segments (helical) span residues 388–408 (PLVF…AKGI), 427–447 (VILL…WWFI), and 463–483 (AATQ…TLSS). Na(+) contacts are provided by Ser470 and Asn502. Helical transmembrane passes span 504 to 524 (ATSI…AHIL), 556 to 576 (WAII…FATI), 597 to 617 (LFTL…ITQG), 631 to 651 (SYSL…IYGL), 672 to 692 (ICWA…SFYQ), and 708 to 728 (MVMG…MFVI). The Na(+) site is built by Leu567 and Asp570. The Cytoplasmic portion of the chain corresponds to 729–790 (KMFLAPGTFI…PKDFELGTQC (62 aa)).

The protein belongs to the sodium:neurotransmitter symporter (SNF) (TC 2.A.22) family. SLC6A5 subfamily. In terms of tissue distribution, first expressed in late neurula stages in the anterior spinal cord, where expression intensifies through the tailbud stages, and by hatching, expression is seen in the hindbrain. During late hatching stages, expression extends along most of the length of the spinal cord, mildly intensifies in the hindbrain, and appears in localized regions of the lateral forebrain and medial midbrain. By the swimming tadpole stage, weak expression appears in the anterior hindbrain, with stronger expression in the posterior, postmitotic neurons.

The protein localises to the cell membrane. It carries out the reaction glycine(out) + chloride(out) + 3 Na(+)(out) = glycine(in) + chloride(in) + 3 Na(+)(in). Functionally, sodium- and chloride-dependent glycine transporter. Terminates the action of glycine by its high affinity sodium-dependent reuptake into presynaptic terminals. May be responsible for the termination of neurotransmission at strychnine-sensitive glycinergic synapses. This chain is Sodium- and chloride-dependent glycine transporter 2, found in Xenopus laevis (African clawed frog).